The primary structure comprises 425 residues: Serine--tRNA ligase (425 aa).

T230–E232 lines the L-serine pocket. R261–E263 contributes to the ATP binding site. E284 is an L-serine binding site. E348–S351 provides a ligand contact to ATP. S384 contributes to the L-serine binding site.

It belongs to the class-II aminoacyl-tRNA synthetase family. Type-1 seryl-tRNA synthetase subfamily. As to quaternary structure, homodimer. The tRNA molecule binds across the dimer.

Its subcellular location is the cytoplasm. The enzyme catalyses tRNA(Ser) + L-serine + ATP = L-seryl-tRNA(Ser) + AMP + diphosphate + H(+). It catalyses the reaction tRNA(Sec) + L-serine + ATP = L-seryl-tRNA(Sec) + AMP + diphosphate + H(+). The protein operates within aminoacyl-tRNA biosynthesis; selenocysteinyl-tRNA(Sec) biosynthesis; L-seryl-tRNA(Sec) from L-serine and tRNA(Sec): step 1/1. Functionally, catalyzes the attachment of serine to tRNA(Ser). Is also able to aminoacylate tRNA(Sec) with serine, to form the misacylated tRNA L-seryl-tRNA(Sec), which will be further converted into selenocysteinyl-tRNA(Sec). This chain is Serine--tRNA ligase, found in Streptococcus pyogenes serotype M28 (strain MGAS6180).